The chain runs to 801 residues: Phenylalanine--tRNA ligase beta subunit (801 aa).

Residues 39 to 147 (GGGLDQVVVA…SDLPLGVPLF (109 aa)) form the tRNA-binding domain. Residues 401–477 (VSHRTIRFRV…RLNGYDRIET (77 aa)) enclose the B5 domain. The Mg(2+) site is built by Asp-455, Asp-461, Glu-464, and Glu-465. An FDX-ACB domain is found at 708-801 (SRFPDTFRDI…LVAKLGATIR (94 aa)).

This sequence belongs to the phenylalanyl-tRNA synthetase beta subunit family. Type 1 subfamily. As to quaternary structure, tetramer of two alpha and two beta subunits. The cofactor is Mg(2+).

Its subcellular location is the cytoplasm. It catalyses the reaction tRNA(Phe) + L-phenylalanine + ATP = L-phenylalanyl-tRNA(Phe) + AMP + diphosphate + H(+). The protein is Phenylalanine--tRNA ligase beta subunit of Geobacter sulfurreducens (strain ATCC 51573 / DSM 12127 / PCA).